We begin with the raw amino-acid sequence, 431 residues long: Glutamyl-tRNA(Gln) amidotransferase subunit A (431 aa).

Catalysis depends on charge relay system residues Lys55 and Ser130. Catalysis depends on Ser154, which acts as the Acyl-ester intermediate.

It belongs to the amidase family. GatA subfamily. In terms of assembly, heterotrimer of A, B and C subunits.

It catalyses the reaction L-glutamyl-tRNA(Gln) + L-glutamine + ATP + H2O = L-glutaminyl-tRNA(Gln) + L-glutamate + ADP + phosphate + H(+). Allows the formation of correctly charged Gln-tRNA(Gln) through the transamidation of misacylated Glu-tRNA(Gln) in organisms which lack glutaminyl-tRNA synthetase. The reaction takes place in the presence of glutamine and ATP through an activated gamma-phospho-Glu-tRNA(Gln). The sequence is that of Glutamyl-tRNA(Gln) amidotransferase subunit A from Methanococcus maripaludis (strain DSM 14266 / JCM 13030 / NBRC 101832 / S2 / LL).